A 360-amino-acid polypeptide reads, in one-letter code: UDP-3-O-acylglucosamine N-acyltransferase (360 aa).

H248 serves as the catalytic Proton acceptor.

Belongs to the transferase hexapeptide repeat family. LpxD subfamily. As to quaternary structure, homotrimer.

The catalysed reaction is a UDP-3-O-[(3R)-3-hydroxyacyl]-alpha-D-glucosamine + a (3R)-hydroxyacyl-[ACP] = a UDP-2-N,3-O-bis[(3R)-3-hydroxyacyl]-alpha-D-glucosamine + holo-[ACP] + H(+). It participates in bacterial outer membrane biogenesis; LPS lipid A biosynthesis. Catalyzes the N-acylation of UDP-3-O-acylglucosamine using 3-hydroxyacyl-ACP as the acyl donor. Is involved in the biosynthesis of lipid A, a phosphorylated glycolipid that anchors the lipopolysaccharide to the outer membrane of the cell. The polypeptide is UDP-3-O-acylglucosamine N-acyltransferase (Chlamydia pneumoniae (Chlamydophila pneumoniae)).